We begin with the raw amino-acid sequence, 88 residues long: HssA/B-like protein 61 (88 aa).

This sequence belongs to the hssA/B family.

In Dictyostelium discoideum (Social amoeba), this protein is HssA/B-like protein 61 (hssl61).